The primary structure comprises 116 residues: Small ribosomal subunit protein bS16 (116 aa).

A disordered region spans residues 88–116 (RNNPKAAVPGKRMAELAKKKADRAAASAE). Positions 99-110 (RMAELAKKKADR) are enriched in basic and acidic residues.

The protein belongs to the bacterial ribosomal protein bS16 family.

The polypeptide is Small ribosomal subunit protein bS16 (Cereibacter sphaeroides (strain ATCC 17029 / ATH 2.4.9) (Rhodobacter sphaeroides)).